The following is a 424-amino-acid chain: UDP-N-acetylglucosamine 1-carboxyvinyltransferase (424 aa).

22 to 23 (KN) provides a ligand contact to phosphoenolpyruvate. Position 98 (Arg-98) interacts with UDP-N-acetyl-alpha-D-glucosamine. The active-site Proton donor is the Cys-122. Residue Cys-122 is modified to 2-(S-cysteinyl)pyruvic acid O-phosphothioketal. Residues 127-131 (RPVDQ), Asp-312, and Ile-334 contribute to the UDP-N-acetyl-alpha-D-glucosamine site.

The protein belongs to the EPSP synthase family. MurA subfamily.

It is found in the cytoplasm. It carries out the reaction phosphoenolpyruvate + UDP-N-acetyl-alpha-D-glucosamine = UDP-N-acetyl-3-O-(1-carboxyvinyl)-alpha-D-glucosamine + phosphate. The protein operates within cell wall biogenesis; peptidoglycan biosynthesis. In terms of biological role, cell wall formation. Adds enolpyruvyl to UDP-N-acetylglucosamine. The sequence is that of UDP-N-acetylglucosamine 1-carboxyvinyltransferase from Xanthomonas axonopodis pv. citri (strain 306).